A 143-amino-acid chain; its full sequence is 3-hydroxyacyl-[acyl-carrier-protein] dehydratase FabZ (143 aa).

H49 is an active-site residue.

Belongs to the thioester dehydratase family. FabZ subfamily.

It is found in the cytoplasm. It catalyses the reaction a (3R)-hydroxyacyl-[ACP] = a (2E)-enoyl-[ACP] + H2O. Involved in unsaturated fatty acids biosynthesis. Catalyzes the dehydration of short chain beta-hydroxyacyl-ACPs and long chain saturated and unsaturated beta-hydroxyacyl-ACPs. The polypeptide is 3-hydroxyacyl-[acyl-carrier-protein] dehydratase FabZ (Wolbachia pipientis subsp. Culex pipiens (strain wPip)).